A 437-amino-acid polypeptide reads, in one-letter code: Interactor protein for cytohesin exchange factors 1 (437 aa).

Residues 41-140 form the PH domain; that stretch reads HADCQGWLYK…WLNKLGSAVI (100 aa). Disordered stretches follow at residues 143 to 225 and 273 to 307; these read ESTT…PDTV and LSSDDTSSLSSNHDHLTVPDKPAGSKIMDKEETKV. Acidic residues predominate over residues 151–162; it reads CYSESEQEDPEI. Over residues 172–200 the composition is skewed to low complexity; the sequence is ASQTQSLTAQQASSSSPSLSGTSYSFSSL. Over residues 201 to 214 the composition is skewed to polar residues; it reads ENTVKTPSSFPSSL. The segment covering 273 to 283 has biased composition (low complexity); the sequence is LSSDDTSSLSS. CRAC domain regions lie at residues 315–320 and 339–348; these read KLYKSL and LRKSFVKRCK. A required for interaction with CYTH2 region spans residues 389–437; that stretch reads KYREWKVMNTLLIQDIYQQQRASPAPDDTDDTPQELKKSPSSPSVENSI. The segment at 406–437 is disordered; sequence QQQRASPAPDDTDDTPQELKKSPSSPSVENSI. Ser-411 is subject to Phosphoserine. Residues 427–437 are compositionally biased toward polar residues; the sequence is SPSSPSVENSI.

Interacts with guanine-nucleotide exchange factors PSCD1, PSCD2, PSCD3 and PSCD4. Interacts (via C-terminus) with cytohesin-2 CYTH2.

The protein resides in the cytoplasm. It localises to the cell membrane. Enhances the promotion of guanine-nucleotide exchange by PSCD2 on ARF6 in a concentration-dependent manner. The sequence is that of Interactor protein for cytohesin exchange factors 1 (IPCEF1) from Homo sapiens (Human).